The chain runs to 196 residues: Large ribosomal subunit protein uL18 (196 aa).

Belongs to the universal ribosomal protein uL18 family. In terms of assembly, part of the 50S ribosomal subunit. Contacts the 5S and 23S rRNAs.

Its function is as follows. This is one of the proteins that bind and probably mediate the attachment of the 5S RNA into the large ribosomal subunit, where it forms part of the central protuberance. The sequence is that of Large ribosomal subunit protein uL18 from Saccharolobus islandicus (strain Y.N.15.51 / Yellowstone #2) (Sulfolobus islandicus).